The primary structure comprises 433 residues: Voltage-gated potassium channel regulatory subunit KCNG3 (433 aa).

The Cytoplasmic portion of the chain corresponds to 1–165 (MTFGRGGAAS…RTFEEPTSSL (165 aa)). Residues 166–187 (AAQILASVSVVFVIVSMVVLCA) traverse the membrane as a helical segment. At 188-217 (STLPDWRAAVADNRSLDDRSRYSASPGREP) the chain is on the extracellular side. A helical transmembrane segment spans residues 218-239 (SGIIEAICIGWFTAECIVRFIV). Over 240 to 250 (SKNKCEFVKRP) the chain is Cytoplasmic. A helical transmembrane segment spans residues 251–271 (LNIIDLLAITPYYISVLMTVF). At 272-281 (TGENSQLQRA) the chain is on the extracellular side. A helical; Voltage-sensor transmembrane segment spans residues 282–302 (GVTLRVLRMMRIFWVIKLARH). The Cytoplasmic segment spans residues 303-317 (FIGLQTLGLTLKRCY). A helical transmembrane segment spans residues 318–339 (REMAMLLVFICVAMAIFSALSQ). At 340–357 (LLEHGLDLETSNKDFASI) the chain is on the extracellular side. Positions 358-369 (PAACWWVIISMT) form an intramembrane region, helical. The short motif at 370-375 (TVGYGD) is the Selectivity filter element. Residues 370-377 (TVGYGDMY) lie within the membrane without spanning it. At 378-384 (PITVPGR) the chain is on the extracellular side. Residues 385–413 (ILGGVCVVSGIVLLALPITFIYHSFVQCY) traverse the membrane as a helical segment. The Cytoplasmic portion of the chain corresponds to 414-433 (HELKFRSARYSRSLSAEFLN).

It belongs to the potassium channel family. G (TC 1.A.1.2) subfamily. Kv6.3/KCNG3 sub-subfamily. In terms of assembly, heterotetramer with KCNB1. Does not form homomultimers.

It is found in the cell membrane. It localises to the cytoplasm. Regulatory subunit of the voltage-gated potassium (Kv) channel which, when coassembled with KCNB1, modulates the kinetics parameters of the heterotetrameric channel namely the inactivation and deactivation rate. Potassium channel subunit that does not form functional channels by itself. Reduces the deactivation rate. Moderately acceleratee activation. This Mus musculus (Mouse) protein is Voltage-gated potassium channel regulatory subunit KCNG3.